A 287-amino-acid chain; its full sequence is ATP synthase gamma chain (287 aa).

It belongs to the ATPase gamma chain family. F-type ATPases have 2 components, CF(1) - the catalytic core - and CF(0) - the membrane proton channel. CF(1) has five subunits: alpha(3), beta(3), gamma(1), delta(1), epsilon(1). CF(0) has three main subunits: a, b and c.

It is found in the cell inner membrane. In terms of biological role, produces ATP from ADP in the presence of a proton gradient across the membrane. The gamma chain is believed to be important in regulating ATPase activity and the flow of protons through the CF(0) complex. The sequence is that of ATP synthase gamma chain from Ectopseudomonas mendocina (strain ymp) (Pseudomonas mendocina).